Reading from the N-terminus, the 255-residue chain is Protein patched homolog 2 (255 aa).

Topologically, residues 1 to 197 (SLLQGGSAYL…LNDIMKSFSD (197 aa)) are extracellular. Residues Asn-147 and Asn-175 are each glycosylated (N-linked (GlcNAc...) asparagine). Residues 198 to 218 (VSVIRVAGGYLLMLAYACVTM) traverse the membrane as a helical segment. The region spanning 199 to 255 (SVIRVAGGYLLMLAYACVTMLRWDCTKSQGAVGLAGVLLVALSVASGLGLCSLLGIS) is the SSD domain. Topologically, residues 219–227 (LRWDCTKSQ) are cytoplasmic. Residues 228 to 248 (GAVGLAGVLLVALSVASGLGL) form a helical membrane-spanning segment. Residues 249–255 (CSLLGIS) lie on the Extracellular side of the membrane.

This sequence belongs to the patched family. In terms of tissue distribution, in the eye, detected in neural retina, iris, retinal pigment epithelium, but not in lens.

Its subcellular location is the membrane. Functionally, may act as a receptor for sonic hedgehog (SHH). This is Protein patched homolog 2 (PTC2) from Cynops pyrrhogaster (Japanese fire-bellied newt).